Consider the following 482-residue polypeptide: Putative metabolite transport protein YfiG (482 aa).

The Cytoplasmic portion of the chain corresponds to 1 to 29 (MSTKKKEAVIGKESLAHKGLLRTITLVST). Residues 30-50 (FGGLLFGYDTGVINGALPFMA) traverse the membrane as a helical segment. At 51 to 59 (TAGQLNLTP) the chain is on the extracellular side. Residues 60-80 (VTEGLVASSLLLGAAFGAMFG) traverse the membrane as a helical segment. Residues 81–92 (GRLSDRHGRRKT) are Cytoplasmic-facing. A helical membrane pass occupies residues 93-113 (ILYLALLFIAATLGCTFSPNA). The Extracellular segment spans residues 114-120 (SVMIAFR). The chain crosses the membrane as a helical span at residues 121–141 (FLLGLAVGCASVTVPTFLAEI). Residues 142–155 (SPAERRGRIVTQNE) lie on the Cytoplasmic side of the membrane. Residues 156 to 176 (LMIVIGQLLAYTFNAIIGSTM) traverse the membrane as a helical segment. Residues 177-184 (GESANVWR) lie on the Extracellular side of the membrane. Residues 185-205 (YMLVIATLPAVVLWFGMLIVP) form a helical membrane-spanning segment. Residues 206–263 (ESPRWLAAKGRMGDALRVLRQIREDSQAQQEIKEIKHAIEGTAKKAGFHDFQEPWIRR) lie on the Cytoplasmic side of the membrane. Residues 264–284 (ILFIGIGIAIVQQITGVNSIM) form a helical membrane-spanning segment. The Extracellular portion of the chain corresponds to 285 to 301 (YYGTEILREAGFQTEAA). Residues 302–322 (LIGNIANGVISVIAVIFGIWL) form a helical membrane-spanning segment. Residues 323-331 (LGKVRRRPM) are Cytoplasmic-facing. A run of 2 helical transmembrane segments spans residues 332–352 (LIIGQIGTMTALLLIGILSIV) and 353–373 (LEGTPALPYVVLSLTILFLAF). Topologically, residues 374–400 (QQTAISTVTWLMLSEIFPMHVRGLGMG) are cytoplasmic. Residues 401 to 421 (ISTFCLWTANFLIGFTFPILL) form a helical membrane-spanning segment. The Extracellular portion of the chain corresponds to 422-423 (NH). A helical transmembrane segment spans residues 424–444 (IGMSATFFIFVAMNILAILFV). At 445–482 (KKYVPETKGRSLEQLEHSFRQYGRRADQEIQNQTTHLS) the chain is on the cytoplasmic side.

This sequence belongs to the major facilitator superfamily. Sugar transporter (TC 2.A.1.1) family.

The protein localises to the cell membrane. In Bacillus subtilis (strain 168), this protein is Putative metabolite transport protein YfiG (yfiG).